We begin with the raw amino-acid sequence, 129 residues long: Large ribosomal subunit protein bL20 (129 aa).

This sequence belongs to the bacterial ribosomal protein bL20 family.

Its function is as follows. Binds directly to 23S ribosomal RNA and is necessary for the in vitro assembly process of the 50S ribosomal subunit. It is not involved in the protein synthesizing functions of that subunit. The sequence is that of Large ribosomal subunit protein bL20 from Mycobacteroides abscessus (strain ATCC 19977 / DSM 44196 / CCUG 20993 / CIP 104536 / JCM 13569 / NCTC 13031 / TMC 1543 / L948) (Mycobacterium abscessus).